Reading from the N-terminus, the 303-residue chain is Acetaldehyde dehydrogenase (303 aa).

The active-site Acyl-thioester intermediate is cysteine 130. NAD(+) contacts are provided by residues 161–169 (SVGPGTRKN) and asparagine 272.

Belongs to the acetaldehyde dehydrogenase family.

It catalyses the reaction acetaldehyde + NAD(+) + CoA = acetyl-CoA + NADH + H(+). This chain is Acetaldehyde dehydrogenase, found in Verminephrobacter eiseniae (strain EF01-2).